Reading from the N-terminus, the 329-residue chain is Tyrosine recombinase XerC 1 (329 aa).

Positions 14 to 101 (APPHPQIGAY…AWRGWYQWLA (88 aa)) constitute a Core-binding (CB) domain. The Tyr recombinase domain maps to 123–320 (RLPKALSVEQ…DFQHLAKIYD (198 aa)). Residues arginine 163, lysine 198, histidine 272, arginine 275, and histidine 298 contribute to the active site. Tyrosine 307 (O-(3'-phospho-DNA)-tyrosine intermediate) is an active-site residue.

Belongs to the 'phage' integrase family. XerC subfamily. In terms of assembly, forms a cyclic heterotetrameric complex composed of two molecules of XerC and two molecules of XerD.

Its subcellular location is the cytoplasm. Site-specific tyrosine recombinase, which acts by catalyzing the cutting and rejoining of the recombining DNA molecules. The XerC-XerD complex is essential to convert dimers of the bacterial chromosome into monomers to permit their segregation at cell division. It also contributes to the segregational stability of plasmids. This Ralstonia nicotianae (strain ATCC BAA-1114 / GMI1000) (Ralstonia solanacearum) protein is Tyrosine recombinase XerC 1 (xerC1).